Here is a 224-residue protein sequence, read N- to C-terminus: Cytidylate kinase (224 aa).

11–19 (GPAAAGKST) serves as a coordination point for ATP.

It belongs to the cytidylate kinase family. Type 1 subfamily.

It localises to the cytoplasm. It carries out the reaction CMP + ATP = CDP + ADP. It catalyses the reaction dCMP + ATP = dCDP + ADP. This chain is Cytidylate kinase, found in Listeria innocua serovar 6a (strain ATCC BAA-680 / CLIP 11262).